A 225-amino-acid chain; its full sequence is PKHD-type hydroxylase YbiX (225 aa).

Residues 78 to 177 (TLSTPLFNRY…RVASFMWIQS (100 aa)) form the Fe2OG dioxygenase domain. Fe cation-binding residues include histidine 96, aspartate 98, and histidine 158. A 2-oxoglutarate-binding site is contributed by arginine 168.

Fe(2+) is required as a cofactor. It depends on L-ascorbate as a cofactor.

The protein is PKHD-type hydroxylase YbiX of Shigella boydii serotype 4 (strain Sb227).